The sequence spans 442 residues: GTPase Der (442 aa).

EngA-type G domains lie at 3-167 (PTIV…PADD) and 177-350 (PRVA…AAAM). GTP is bound by residues 9–16 (GRPNVGKS), 56–60 (DTAGF), 119–122 (NKAE), 183–190 (GRPNVGKS), 230–234 (DTAGL), and 295–298 (NKWD). A KH-like domain is found at 351 to 435 (SNLSTPRLTR…PLRIQFRTAH (85 aa)).

It belongs to the TRAFAC class TrmE-Era-EngA-EngB-Septin-like GTPase superfamily. EngA (Der) GTPase family. In terms of assembly, associates with the 50S ribosomal subunit.

GTPase that plays an essential role in the late steps of ribosome biogenesis. The sequence is that of GTPase Der from Azoarcus sp. (strain BH72).